Consider the following 200-residue polypeptide: NADH-quinone oxidoreductase subunit C (200 aa).

Belongs to the complex I 30 kDa subunit family. In terms of assembly, NDH-1 is composed of 14 different subunits. Subunits NuoB, C, D, E, F, and G constitute the peripheral sector of the complex.

The protein resides in the cell inner membrane. It carries out the reaction a quinone + NADH + 5 H(+)(in) = a quinol + NAD(+) + 4 H(+)(out). Functionally, NDH-1 shuttles electrons from NADH, via FMN and iron-sulfur (Fe-S) centers, to quinones in the respiratory chain. The immediate electron acceptor for the enzyme in this species is believed to be ubiquinone. Couples the redox reaction to proton translocation (for every two electrons transferred, four hydrogen ions are translocated across the cytoplasmic membrane), and thus conserves the redox energy in a proton gradient. The protein is NADH-quinone oxidoreductase subunit C of Maricaulis maris (strain MCS10) (Caulobacter maris).